Here is a 987-residue protein sequence, read N- to C-terminus: Kinesin-like protein KIN-14G (987 aa).

One can recognise a Calponin-homology (CH) domain in the interval 44–163 (SLRRYEAAGW…CILALKSYSE (120 aa)). The disordered stretch occupies residues 201 to 221 (ISRTQSTDMLSTDQPLSSDGD). Positions 394–721 (NIRVYCRVRP…LKFAERVGSV (328 aa)) constitute a Kinesin motor domain. Position 478-485 (478-485 (GQTGSGKT)) interacts with ATP. Residues 725 to 754 (AARVNKDNSEVKELKEQIANLKMALVRKGN) are a coiled coil. 2 disordered regions span residues 759–849 (QPTA…ESKS) and 927–987 (NIQN…SLGT). A compositionally biased stretch (polar residues) spans 788-797 (MGNTSNNSRP). Basic and acidic residues predominate over residues 840 to 849 (GKDEDRESKS). Polar residues predominate over residues 964 to 974 (PPNTVNSQPQR).

This sequence belongs to the TRAFAC class myosin-kinesin ATPase superfamily. Kinesin family. KIN-14 subfamily. Monomer. In terms of tissue distribution, flower specific.

It is found in the cytoplasm. The protein localises to the cytoskeleton. Its function is as follows. Microtubule-binding motor protein. This is Kinesin-like protein KIN-14G from Arabidopsis thaliana (Mouse-ear cress).